Here is a 1142-residue protein sequence, read N- to C-terminus: Coiled-coil domain-containing protein 40 (1142 aa).

Disordered stretches follow at residues 1 to 197 and 251 to 274; these read MAEP…QVLP and PSTE…AEDE. Basic and acidic residues-rich tracts occupy residues 11–27 and 35–55; these read SHPE…EGNN and PEKD…HPEE. Residues 63 to 96 are compositionally biased toward acidic residues; the sequence is AIEEGEVETEGEAAVEGEEEAVSYGDAESEEEYY. The residue at position 252 (serine 252) is a Phosphoserine. A compositionally biased stretch (acidic residues) spans 265–274; sequence EGSDEEAEDE. 5 coiled-coil regions span residues 293 to 319, 349 to 470, 526 to 627, 684 to 950, and 1005 to 1054; these read AALK…ATKQ, HDRH…QAED, QAKS…LRRK, TSSR…LGQL, and VRKA…LTRL.

This sequence belongs to the CCDC40 family.

It localises to the cytoplasm. It is found in the cell projection. The protein localises to the cilium. Its function is as follows. Required for assembly of dynein regulatory complex (DRC) and inner dynein arm (IDA) complexes, which are responsible for ciliary beat regulation, thereby playing a central role in motility in cilia and flagella. Probably acts together with CCDC39 to form a molecular ruler that determines the 96 nanometer (nm) repeat length and arrangements of components in cilia and flagella. Not required for outer dynein arm complexes assembly. Required for axonemal recruitment of CCDC39. In Homo sapiens (Human), this protein is Coiled-coil domain-containing protein 40.